The chain runs to 295 residues: Taste receptor type 2 member 120 (295 aa).

The Extracellular segment spans residues 1–5 (MDLTE). A helical transmembrane segment spans residues 6–26 (WIVTIIMMIEFLLGNCANFFI). At 27-45 (MVVNAIDCMKRRKISSADR) the chain is on the cytoplasmic side. Residues 46-66 (IITALAISRIGLLWAMLMNWH) form a helical membrane-spanning segment. Over 67 to 83 (SRVYTTDTYSFQVTAFS) the chain is Extracellular. A helical membrane pass occupies residues 84 to 104 (GIIWAITNHFTTWLGTILSMF). Over 105–125 (YLFKIANFSNCLFLHLKRKLD) the chain is Cytoplasmic. The helical transmembrane segment at 126–146 (SVLLVIFLVSSLLVFAYLGVV) threads the bilayer. The Extracellular portion of the chain corresponds to 147-177 (NIKKIAWLSVHEGNVTVKSKLMNIASIRDTL). N-linked (GlcNAc...) asparagine glycosylation occurs at Asn160. The helical transmembrane segment at 178 to 198 (LFSLINIAPFGISLTCVLLLI) threads the bilayer. The Cytoplasmic portion of the chain corresponds to 199-230 (YSLGKHLKNMKFYGKGCQDQSTMVHIRALQTV). The chain crosses the membrane as a helical span at residues 231–251 (VSFLLLYATYSSCVIISGWSI). Residues 252–255 (QNVP) are Extracellular-facing. The helical transmembrane segment at 256 to 276 (IFLFCVTIGAFYPAGHSCILI) threads the bilayer. The Cytoplasmic portion of the chain corresponds to 277–295 (WGNQKLKQFLLLFLRQMKC).

Belongs to the G-protein coupled receptor T2R family.

The protein localises to the membrane. Its function is as follows. Putative taste receptor which may play a role in the perception of bitterness. The polypeptide is Taste receptor type 2 member 120 (Rattus norvegicus (Rat)).